The sequence spans 598 residues: Probable translation initiation factor IF-2 (598 aa).

A tr-type G domain is found at 3–225 (LRCPIVSVLG…GLAQRFLEQK (223 aa)). A G1 region spans residues 12–19 (GHVDHGKT). GTP is bound at residue 12 to 19 (GHVDHGKT). A G2 region spans residues 37 to 41 (GITQH). Residues 76-79 (DTPG) are G3. GTP-binding positions include 76-80 (DTPGH) and 130-133 (NKVD). Positions 130 to 133 (NKVD) are G4. The segment at 200–202 (SAM) is G5.

Belongs to the TRAFAC class translation factor GTPase superfamily. Classic translation factor GTPase family. IF-2 subfamily.

Its function is as follows. Function in general translation initiation by promoting the binding of the formylmethionine-tRNA to ribosomes. Seems to function along with eIF-2. This is Probable translation initiation factor IF-2 from Methanococcus maripaludis (strain DSM 14266 / JCM 13030 / NBRC 101832 / S2 / LL).